A 426-amino-acid polypeptide reads, in one-letter code: Enolase (426 aa).

Q163 contributes to the (2R)-2-phosphoglycerate binding site. E205 serves as the catalytic Proton donor. Positions 242, 283, and 310 each coordinate Mg(2+). 4 residues coordinate (2R)-2-phosphoglycerate: K335, R364, S365, and K386. K335 (proton acceptor) is an active-site residue.

It belongs to the enolase family. It depends on Mg(2+) as a cofactor.

It is found in the cytoplasm. The protein resides in the secreted. It localises to the cell surface. The catalysed reaction is (2R)-2-phosphoglycerate = phosphoenolpyruvate + H2O. It participates in carbohydrate degradation; glycolysis; pyruvate from D-glyceraldehyde 3-phosphate: step 4/5. In terms of biological role, catalyzes the reversible conversion of 2-phosphoglycerate (2-PG) into phosphoenolpyruvate (PEP). It is essential for the degradation of carbohydrates via glycolysis. This chain is Enolase, found in Aquifex aeolicus (strain VF5).